Here is a 308-residue protein sequence, read N- to C-terminus: Dipeptide transport system permease protein DppB (308 aa).

The next 7 helical transmembrane spans lie at 10–30, 59–79, 100–120, 131–151, 168–188, 228–248, and 278–298; these read WAMAATILVITTLTFVLMKVI, LIFQYIFYLKSIITFDFGPSI, LGMTAIVIAVISGLVLGVIAA, AMSLAVLGISIPNFILATLLI, SPIHMVLPTAALAVGPMAIIA, MPVITVLGTLVASILTGSFVI, and VFYSVILIIMLFLVDLAYGLL. Residues 94-295 enclose the ABC transmembrane type-1 domain; sequence FPVSFELGMT…IMLFLVDLAY (202 aa).

It belongs to the binding-protein-dependent transport system permease family. OppBC subfamily.

It is found in the cell membrane. Functionally, probably part of the ABC transporter DppBCDE involved in dipeptide transport. Responsible for the translocation of the substrate across the membrane. The protein is Dipeptide transport system permease protein DppB (dppB) of Bacillus subtilis (strain 168).